Consider the following 348-residue polypeptide: Phospho-2-dehydro-3-deoxyheptonate aldolase, Trp-sensitive (348 aa).

It belongs to the class-I DAHP synthase family.

The catalysed reaction is D-erythrose 4-phosphate + phosphoenolpyruvate + H2O = 7-phospho-2-dehydro-3-deoxy-D-arabino-heptonate + phosphate. The protein operates within metabolic intermediate biosynthesis; chorismate biosynthesis; chorismate from D-erythrose 4-phosphate and phosphoenolpyruvate: step 1/7. Stereospecific condensation of phosphoenolpyruvate (PEP) and D-erythrose-4-phosphate (E4P) giving rise to 3-deoxy-D-arabino-heptulosonate-7-phosphate (DAHP). The protein is Phospho-2-dehydro-3-deoxyheptonate aldolase, Trp-sensitive (aroH) of Buchnera aphidicola subsp. Baizongia pistaciae (strain Bp).